Reading from the N-terminus, the 381-residue chain is Alkanesulfonate monooxygenase (381 aa).

Belongs to the SsuD family. As to quaternary structure, homotetramer.

The catalysed reaction is an alkanesulfonate + FMNH2 + O2 = an aldehyde + FMN + sulfite + H2O + 2 H(+). In terms of biological role, catalyzes the desulfonation of aliphatic sulfonates. In Shigella flexneri, this protein is Alkanesulfonate monooxygenase.